The chain runs to 795 residues: Phenylalanine--tRNA ligase beta subunit (795 aa).

The 110-residue stretch at 39-148 (AGTFNGVKVG…IDAPIGMDFR (110 aa)) folds into the tRNA-binding domain. Residues 401-476 (PKPNKVALRR…RIYGYDNIPN (76 aa)) form the B5 domain. The Mg(2+) site is built by aspartate 454, aspartate 460, glutamate 463, and glutamate 464. The region spanning 701–794 (SKFPANRRDI…VSEKFGASLR (94 aa)) is the FDX-ACB domain.

It belongs to the phenylalanyl-tRNA synthetase beta subunit family. Type 1 subfamily. As to quaternary structure, tetramer of two alpha and two beta subunits. Requires Mg(2+) as cofactor.

It is found in the cytoplasm. The enzyme catalyses tRNA(Phe) + L-phenylalanine + ATP = L-phenylalanyl-tRNA(Phe) + AMP + diphosphate + H(+). The polypeptide is Phenylalanine--tRNA ligase beta subunit (Vibrio vulnificus (strain CMCP6)).